Here is a 196-residue protein sequence, read N- to C-terminus: MMIDIPEDKLVAGVDEVGRGPLVGDVVTAAVILDPANPITGLADSKKLSEKKRLALFDEIKQKALAWAIGRASPEEIDELNILHATMLAMQRAVAGLSITPELVFIDGNRCPSLPMEARAVVKGDSLVAAISAASILAKVTRDAEMTELDSRHPEYGFARHKGYPTPEHLAILAERGPLPAYRKSFKPVRHALGIE.

The RNase H type-2 domain occupies 9–196 (KLVAGVDEVG…KPVRHALGIE (188 aa)). Asp15, Glu16, and Asp107 together coordinate a divalent metal cation.

It belongs to the RNase HII family. Mn(2+) is required as a cofactor. Requires Mg(2+) as cofactor.

Its subcellular location is the cytoplasm. It carries out the reaction Endonucleolytic cleavage to 5'-phosphomonoester.. Endonuclease that specifically degrades the RNA of RNA-DNA hybrids. This chain is Ribonuclease HII, found in Aeromonas salmonicida (strain A449).